A 379-amino-acid polypeptide reads, in one-letter code: MQSLPSRRSETNKKIISEKISETITLNKLPMSRYLHFFLFTVTDVDDIWNFSETKESSLTWPKIDAKQLNEYVNTELTVYQRPFSLLGIPQNGLFKSCEKIYDEFFAEHMDNEKKYLTFPRNRSSRFGFENVPRVNELPILINHFEKSRMDVILNTNKIVLVNRELIWVPCEQVRIFNLNVSLNIPDGLFGILTGTVNDTLCECVTELITTENVISISLINLSSESVMLLPGDIELVINILPCYIPEPWETYNFPSPNFIKFSLITNKDFYVESNNYTIQNFDYMFDCPDELKALIIANKEILCHGLVVETNIWLKNTTPSVKIFNPTSQRIFVQAGICIATIIFTCGHFILKLLPNRVLNQLAVLDKTSMLWFQYSTE.

It belongs to the dUTPase family. The cofactor is Mg(2+).

The catalysed reaction is dUTP + H2O = dUMP + diphosphate + H(+). In terms of biological role, involved in nucleotide metabolism: produces dUMP, the immediate precursor of thymidine nucleotides and decreases the intracellular concentration of dUTP to avoid uracil incorporation into viral DNA. The sequence is that of Deoxyuridine 5'-triphosphate nucleotidohydrolase from Human herpesvirus 7 (strain JI) (HHV-7).